We begin with the raw amino-acid sequence, 222 residues long: Ribonuclease HII (222 aa).

The RNase H type-2 domain maps to 17 to 206 (DLVAGVDEVG…VRAAHEARAS (190 aa)). Residues aspartate 23, glutamate 24, and aspartate 115 each contribute to the a divalent metal cation site.

This sequence belongs to the RNase HII family. Mn(2+) serves as cofactor. It depends on Mg(2+) as a cofactor.

The protein localises to the cytoplasm. It catalyses the reaction Endonucleolytic cleavage to 5'-phosphomonoester.. Endonuclease that specifically degrades the RNA of RNA-DNA hybrids. The polypeptide is Ribonuclease HII (Pseudomonas savastanoi pv. phaseolicola (strain 1448A / Race 6) (Pseudomonas syringae pv. phaseolicola (strain 1448A / Race 6))).